Here is a 236-residue protein sequence, read N- to C-terminus: uncharacterized protein (236 aa).

Residues 15–34 (GGMAHIISEAVIAGSIGLYF) traverse the membrane as a helical segment. Positions 36–71 (KKISALEQTVQELQSQLEVQNNQLQWLIQQQTRRLA) form a coiled coil. 2 disordered regions span residues 83 to 113 (SPLPPQRDYRQQSTTTNAAGNNGAYPSFQFK) and 185 to 236 (ATTQ…IDCE). Polar residues-rich tracts occupy residues 93–102 (QQSTTTNAAG) and 185–195 (ATTQVSTFSKP). Residues 225–236 (ALDKILNDIDCE) are compositionally biased toward basic and acidic residues.

It localises to the membrane. This is an uncharacterized protein from Aedes vexans (Inland floodwater mosquito).